We begin with the raw amino-acid sequence, 259 residues long: Putative hydro-lyase Bphyt_4813 (259 aa).

It belongs to the D-glutamate cyclase family.

In Paraburkholderia phytofirmans (strain DSM 17436 / LMG 22146 / PsJN) (Burkholderia phytofirmans), this protein is Putative hydro-lyase Bphyt_4813.